Here is a 549-residue protein sequence, read N- to C-terminus: MSRVVRAPRGTELHCKNWQIEAPYRMIMNNLDPEVAEDPANLIVYGGAGKAARNWEAFDKILESLENLEEDETLLVQSGKPVGIFKTHEMAPRVLISNAMLVPKWANWETFWDLEAKGLTMYGQMTAGSWIYIGSQGIVEGTFETFAALAKKHFDGSLKGKFVLSAGLGGMGGAQPLAITMLDGACLIVEVDRNRIKRRLETKYLDVMAEDLDEALGMVMKAKEEGRALSVGLVGNAADVHPELVRRGIIPDVVTDQTSAHDPLNGYVPNGMTLDEAIALRKSNPEEYIKRAKKAMAEHVLAMLEMQKRGAIVFDYGNNIRRMAYDEGVKDAFNIPSYVPEYIRDLFCEGKGPFRWVALSGDPEDIYKTDQKVLELFPDDPILNRWIRLARERVKFQGLPARICWLGYGQRAEFGLAINEMVRKGELKAPIVIGRDHHDTGSVASPYRETEAMKDGSDAIADWPILNALLNTASGATWVSVHHGGGVGIGYSIHAGVVVCADGTKETDLRIERVLTGDPGLGIVRHADAGYEIAIKTAKEKGIKMPMLK.

Residues 46 to 47, glutamine 124, 170 to 172, glutamate 190, arginine 195, 236 to 237, 257 to 261, 267 to 268, and tyrosine 316 each bind NAD(+); these read GG, GMG, NA, QTSAH, and YV. Cysteine 404 is a catalytic residue. Glycine 486 is an NAD(+) binding site.

Belongs to the urocanase family. NAD(+) is required as a cofactor.

The protein resides in the cytoplasm. The enzyme catalyses 4-imidazolone-5-propanoate = trans-urocanate + H2O. Its pathway is amino-acid degradation; L-histidine degradation into L-glutamate; N-formimidoyl-L-glutamate from L-histidine: step 2/3. Functionally, catalyzes the conversion of urocanate to 4-imidazolone-5-propionate. The chain is Urocanate hydratase from Caldanaerobacter subterraneus subsp. tengcongensis (strain DSM 15242 / JCM 11007 / NBRC 100824 / MB4) (Thermoanaerobacter tengcongensis).